The following is a 274-amino-acid chain: Undecaprenyl-diphosphatase (274 aa).

The next 8 membrane-spanning stretches (helical) occupy residues 4 to 24 (LLVI…LLPI), 46 to 66 (VVFE…EYRV), 86 to 106 (INVA…SDFI), 109 to 129 (VLFS…IIMW), 145 to 165 (ISYA…IPGT), 188 to 208 (FSFF…LWEA), 214 to 234 (IEDM…TFAV), and 250 to 270 (FAWY…TGVI).

This sequence belongs to the UppP family.

The protein localises to the cell inner membrane. The enzyme catalyses di-trans,octa-cis-undecaprenyl diphosphate + H2O = di-trans,octa-cis-undecaprenyl phosphate + phosphate + H(+). Its function is as follows. Catalyzes the dephosphorylation of undecaprenyl diphosphate (UPP). Confers resistance to bacitracin. In Cellvibrio japonicus (strain Ueda107) (Pseudomonas fluorescens subsp. cellulosa), this protein is Undecaprenyl-diphosphatase.